The primary structure comprises 292 residues: 4-hydroxy-tetrahydrodipicolinate synthase (292 aa).

Thr45 contributes to the pyruvate binding site. The active-site Proton donor/acceptor is Tyr133. The Schiff-base intermediate with substrate role is filled by Lys161. Residue Ile203 participates in pyruvate binding.

This sequence belongs to the DapA family. Homotetramer; dimer of dimers.

It is found in the cytoplasm. It catalyses the reaction L-aspartate 4-semialdehyde + pyruvate = (2S,4S)-4-hydroxy-2,3,4,5-tetrahydrodipicolinate + H2O + H(+). It functions in the pathway amino-acid biosynthesis; L-lysine biosynthesis via DAP pathway; (S)-tetrahydrodipicolinate from L-aspartate: step 3/4. In terms of biological role, catalyzes the condensation of (S)-aspartate-beta-semialdehyde [(S)-ASA] and pyruvate to 4-hydroxy-tetrahydrodipicolinate (HTPA). The sequence is that of 4-hydroxy-tetrahydrodipicolinate synthase from Shigella flexneri.